Here is a 783-residue protein sequence, read N- to C-terminus: Galactinol--sucrose galactosyltransferase (783 aa).

It belongs to the glycosyl hydrolases 36 family.

It catalyses the reaction alpha-D-galactosyl-(1-&gt;3)-1D-myo-inositol + sucrose = raffinose + myo-inositol. Its activity is regulated as follows. Inhibited by Ag(2)+, Hg(2+), Zn(2+), p-chloromercuribenzoate (pCMB) and 1-deoxygalactonojirimycin. Transglycosidase operating by a ping-pong reaction mechanism. Involved in the synthesis of raffinose, a major soluble carbohydrate in seeds, roots and tubers. Specific for galactinol and p-nitrophenyl-alpha-D-galactoside as galactosyl donors. Able to utilize sucrose, lactose, 4-beta-galactobiose, N-acetyl-D-lactosamine, trehalose and lacto-N-biose as acceptors. May also act as a glycoside hydrolase. This chain is Galactinol--sucrose galactosyltransferase (RFS), found in Oryza sativa subsp. japonica (Rice).